We begin with the raw amino-acid sequence, 379 residues long: L-lactate dehydrogenase (379 aa).

Positions 1–379 (MIISSSTDYR…ISPDSLVRGL (379 aa)) constitute an FMN hydroxy acid dehydrogenase domain. Substrate is bound at residue Tyr24. Residues Ser106 and Gln127 each coordinate FMN. A substrate-binding site is contributed by Tyr129. Thr155 provides a ligand contact to FMN. Arg164 contacts substrate. Lys251 contributes to the FMN binding site. His275 serves as the catalytic Proton acceptor. Position 278 (Arg278) interacts with substrate. Position 306 to 330 (306 to 330 (DSGIRSGLDVVRMIAQGADGVLIGR)) interacts with FMN.

It belongs to the FMN-dependent alpha-hydroxy acid dehydrogenase family. FMN serves as cofactor.

It localises to the cell inner membrane. It carries out the reaction (S)-lactate + A = pyruvate + AH2. Functionally, catalyzes the conversion of L-lactate to pyruvate. Is coupled to the respiratory chain. This is L-lactate dehydrogenase from Allorhizobium ampelinum (strain ATCC BAA-846 / DSM 112012 / S4) (Agrobacterium vitis (strain S4)).